A 316-amino-acid chain; its full sequence is 4-hydroxy-3-methylbut-2-enyl diphosphate reductase (316 aa).

Cys12 contributes to the [4Fe-4S] cluster binding site. The (2E)-4-hydroxy-3-methylbut-2-enyl diphosphate site is built by His41 and His74. Dimethylallyl diphosphate-binding residues include His41 and His74. Positions 41 and 74 each coordinate isopentenyl diphosphate. Cys96 is a binding site for [4Fe-4S] cluster. His124 lines the (2E)-4-hydroxy-3-methylbut-2-enyl diphosphate pocket. Residue His124 participates in dimethylallyl diphosphate binding. His124 contributes to the isopentenyl diphosphate binding site. Glu126 acts as the Proton donor in catalysis. Thr169 provides a ligand contact to (2E)-4-hydroxy-3-methylbut-2-enyl diphosphate. Cys199 is a binding site for [4Fe-4S] cluster. Residues Ser227, Ser228, Asn229, and Ser271 each coordinate (2E)-4-hydroxy-3-methylbut-2-enyl diphosphate. Dimethylallyl diphosphate is bound by residues Ser227, Ser228, Asn229, and Ser271. The isopentenyl diphosphate site is built by Ser227, Ser228, Asn229, and Ser271.

This sequence belongs to the IspH family. The cofactor is [4Fe-4S] cluster.

The catalysed reaction is isopentenyl diphosphate + 2 oxidized [2Fe-2S]-[ferredoxin] + H2O = (2E)-4-hydroxy-3-methylbut-2-enyl diphosphate + 2 reduced [2Fe-2S]-[ferredoxin] + 2 H(+). It carries out the reaction dimethylallyl diphosphate + 2 oxidized [2Fe-2S]-[ferredoxin] + H2O = (2E)-4-hydroxy-3-methylbut-2-enyl diphosphate + 2 reduced [2Fe-2S]-[ferredoxin] + 2 H(+). It functions in the pathway isoprenoid biosynthesis; dimethylallyl diphosphate biosynthesis; dimethylallyl diphosphate from (2E)-4-hydroxy-3-methylbutenyl diphosphate: step 1/1. The protein operates within isoprenoid biosynthesis; isopentenyl diphosphate biosynthesis via DXP pathway; isopentenyl diphosphate from 1-deoxy-D-xylulose 5-phosphate: step 6/6. Catalyzes the conversion of 1-hydroxy-2-methyl-2-(E)-butenyl 4-diphosphate (HMBPP) into a mixture of isopentenyl diphosphate (IPP) and dimethylallyl diphosphate (DMAPP). Acts in the terminal step of the DOXP/MEP pathway for isoprenoid precursor biosynthesis. The sequence is that of 4-hydroxy-3-methylbut-2-enyl diphosphate reductase from Vibrio vulnificus (strain CMCP6).